The primary structure comprises 20 residues: Ribosome-inactivating protein (20 aa).

Positions 1–20 are disordered; the sequence is NVRFDLSGATSSSYKTFIKN. Over residues 8–20 the composition is skewed to polar residues; that stretch reads GATSSSYKTFIKN.

It belongs to the ribosome-inactivating protein family. Type 1 RIP subfamily.

The enzyme catalyses Endohydrolysis of the N-glycosidic bond at one specific adenosine on the 28S rRNA.. The protein is Ribosome-inactivating protein of Cucurbita pepo (Vegetable marrow).